A 174-amino-acid chain; its full sequence is Regenerating islet-derived protein 3-gamma (174 aa).

Positions 1 to 26 are cleaved as a signal peptide; the sequence is MLPRITITIMSWMLLSCLMLLSQVQG. Residues 27–37 constitute a propeptide that is removed on maturation; the sequence is EVAKKDAPSSR. 3 cysteine pairs are disulfide-bonded: Cys40–Cys51, Cys68–Cys170, and Cys145–Cys162. Residues 47 to 171 enclose the C-type lectin domain; the sequence is YGSYCYALFS…CNLELPYVCK (125 aa). Residues 103–118 are sufficient to activate EXTL3; the sequence is WIGLHDPTLGYEPNRG. His107 serves as a coordination point for Zn(2+). The short motif at 114–116 is the EPN element; that stretch reads EPN. Zn(2+)-binding residues include Glu121 and His144.

In terms of assembly, forms a hexameric membrane-permeabilizing oligomeric pore on membrane phospholipids. The hexamer is formed by three dimers related by helical symmetry. Forms filaments, filamentation traps pore complexes and limits damage to host cells. Interacts with EXTL3. In terms of processing, proteolytic processing by trypsin removes an inhibitory N-terminal propeptide and is essential for peptidoglycan binding and antibacterial activity. In terms of tissue distribution, predominantly expressed in the small intestine, including Paneth cells (at protein level). Hardly detectable in the colon (at protein level). Highly expressed in the lung epithelium during methicillin-resistant S.aureus infection and allergic airway inflammation (at protein level). Skin injury increases its epidermal expression. Also expressed in the pancreas. Expressed by nocireceptors.

It is found in the secreted. The protein localises to the cytoplasm. With respect to regulation, lipopolysaccharide inhibits pore-forming activity, explaining why is bactericidal for Gram-positive but not Gram-negative bacteria. Functionally, bactericidal C-type lectin which acts exclusively against Gram-positive bacteria and mediates bacterial killing by binding to surface-exposed carbohydrate moieties of peptidoglycan. Restricts bacterial colonization of the intestinal epithelial surface and consequently limits activation of adaptive immune responses by the microbiota. Acts as a hormone in response to different stimuli like anti-inflammatory signals, such as IL17A, or gut microbiome. Is secreted by different cell types to activate its receptor EXTL3 and induce cell specific signaling pathways. Induced by IL17A in keratinocytes, regulates keratinocyte proliferation and differentiation after skin injury. In parallel, inhibits skin inflammation through the inhibition of inflammatory cytokines such as IL6 and TNF. Induced by IL22 in lung epithelial cells, inhibits cytokine production and regulates allergic airway inflammation. Induced in small intestine by inulin-enriched diet and Lactobacillus gasseri enriched microbiome, plays a role in the improvement of gut barrier function, the regulation of energy balance and glucose levels. Modulates microbiota composition in duodenal contents. Produced by nociceptor in response to endotoxins, prevents endotoxic death by targeting kynurenine pathway in microglia. In terms of biological role, has bacteriostatic activity. Its function is as follows. Has bactericidal activity against L.monocytogenes and methicillin-resistant S.aureus. This is Regenerating islet-derived protein 3-gamma from Mus musculus (Mouse).